The sequence spans 287 residues: 3-hydroxyanthranilate 3,4-dioxygenase (287 aa).

Residues M1–D163 form a domain A (catalytic) region. Residue R46 coordinates O2. Fe cation is bound by residues H50, E56, and H94. E56 contributes to the substrate binding site. Substrate contacts are provided by R98 and E108. The tract at residues P164 to V180 is linker. Residues M181 to Y287 form a domain B region.

It belongs to the 3-HAO family. As to quaternary structure, monomer. Fe(2+) is required as a cofactor.

The protein localises to the cytoplasm. The protein resides in the cytosol. The catalysed reaction is 3-hydroxyanthranilate + O2 = (2Z,4Z)-2-amino-3-carboxymuconate 6-semialdehyde. It participates in cofactor biosynthesis; NAD(+) biosynthesis; quinolinate from L-kynurenine: step 3/3. Functionally, catalyzes the oxidative ring opening of 3-hydroxyanthranilate to 2-amino-3-carboxymuconate semialdehyde, which spontaneously cyclizes to quinolinate. This is 3-hydroxyanthranilate 3,4-dioxygenase (haao) from Danio rerio (Zebrafish).